We begin with the raw amino-acid sequence, 311 residues long: Prohibitin-2 (311 aa).

The chain crosses the membrane as a helical span at residues 39-57; the sequence is GAGMGLAGLVLLGGAAFVA. The AIM motif lies at 141–144; it reads YRTL.

The protein belongs to the prohibitin family. The mitochondrial prohibitin complex consists of two subunits (PHB1 and PHB2). The subunits assemble into a membrane-associated ring-shaped supercomplex of approximately 1 mDa. Interacts with ATG24/SNX4; the interaction is direct and plays a role in mitophagy.

The protein resides in the mitochondrion inner membrane. Functionally, prohibitin probably acts as a holdase/unfoldase for the stabilization of newly synthesized mitochondrial proteins. Involved in mitophagy. Required for the switch to necrotrophic growth. The chain is Prohibitin-2 from Colletotrichum higginsianum (strain IMI 349063) (Crucifer anthracnose fungus).